A 147-amino-acid chain; its full sequence is Large ribosomal subunit protein bL9 (147 aa).

Residues 40-60 (TTGNLKQHEAHERKAAEEAKQ) form a disordered region. Over residues 45–59 (KQHEAHERKAAEEAK) the composition is skewed to basic and acidic residues.

It belongs to the bacterial ribosomal protein bL9 family.

Binds to the 23S rRNA. This chain is Large ribosomal subunit protein bL9, found in Exiguobacterium sibiricum (strain DSM 17290 / CCUG 55495 / CIP 109462 / JCM 13490 / 255-15).